A 424-amino-acid polypeptide reads, in one-letter code: Tol-Pal system protein TolB (424 aa).

The N-terminal stretch at 1-24 is a signal peptide; that stretch reads MNKARAIARWISFLLLIAAGQVCA.

The protein belongs to the TolB family. As to quaternary structure, the Tol-Pal system is composed of five core proteins: the inner membrane proteins TolA, TolQ and TolR, the periplasmic protein TolB and the outer membrane protein Pal. They form a network linking the inner and outer membranes and the peptidoglycan layer.

The protein localises to the periplasm. Its function is as follows. Part of the Tol-Pal system, which plays a role in outer membrane invagination during cell division and is important for maintaining outer membrane integrity. In Methylococcus capsulatus (strain ATCC 33009 / NCIMB 11132 / Bath), this protein is Tol-Pal system protein TolB.